We begin with the raw amino-acid sequence, 248 residues long: 14-3-3 protein zeta (248 aa).

This sequence belongs to the 14-3-3 family. In terms of assembly, homodimer.

Its subcellular location is the cytoplasm. Adapter protein implicated in the regulation of a large spectrum of both general and specialized signaling pathways. Binds to a large number of partners, usually by recognition of a phosphoserine or phosphothreonine motif. Binding generally results in the modulation of the activity of the binding partner. This is 14-3-3 protein zeta (14-3-3zeta) from Aedes aegypti (Yellowfever mosquito).